The primary structure comprises 473 residues: Peptidoglycan DL-endopeptidase CwlO (473 aa).

The N-terminal stretch at 1 to 30 (MRKSLITLGLASVIGTSSFLIPFTSKTASA) is a signal peptide. Disordered stretches follow at residues 31-52 (ETLD…SSIE), 79-98 (ALDT…KTKE), and 237-337 (EASE…GTVI). Basic and acidic residues predominate over residues 33-44 (LDEKKQKIESKQ). Residues 241–250 (LANQKANTEA) are compositionally biased toward polar residues. Basic and acidic residues-rich tracts occupy residues 251–260 (EQARIKKEQE) and 267–277 (KKQEEAQKASD). Residues 291–337 (SSKASSSDDSSDNSSDNSSNGSSNSSSNGSSSKKSSGSNSNSGGTVI) show a composition bias toward low complexity. The NlpC/P60 domain maps to 340 to 471 (SGGIEGAISV…AAFKGVVRRV (132 aa)). Catalysis depends on C377, which acts as the Nucleophile. The active-site Proton acceptor is H431. N443 is an active-site residue.

The protein belongs to the peptidase C40 family. Identified in the extracellular proteome as a number of processing products of about 50 and 30 kDa.

The protein resides in the secreted. Its subcellular location is the cell wall. Detected in exponentially growing cells, the 50 and 30 kDa processing products disappear upon entry into stationary phase with the concomitant appearance of a 20 kDa products. The 50 kDa form persists in the absence of extracellular proteases. Its function is as follows. The C-terminal part of CwlO shows a cell wall hydrolytic DL-endopeptidase activity. The sequence is that of Peptidoglycan DL-endopeptidase CwlO (cwlO) from Bacillus subtilis (strain 168).